Consider the following 379-residue polypeptide: Chaperone protein DnaJ (379 aa).

Residues 5 to 69 (EYYERLGVDK…QKRAAYDQYG (65 aa)) enclose the J domain. Residues 141 to 223 (GVEKQVKYNR…CHGSGHEKVA (83 aa)) form a CR-type zinc finger. Zn(2+) contacts are provided by Cys154, Cys157, Cys171, Cys174, Cys197, Cys200, Cys211, and Cys214. CXXCXGXG motif repeat units follow at residues 154–161 (CHTCGGSG), 171–178 (CHKCGGRG), 197–204 (CDVCNGTG), and 211–218 (CETCHGSG).

Belongs to the DnaJ family. As to quaternary structure, homodimer. It depends on Zn(2+) as a cofactor.

Its subcellular location is the cytoplasm. Its function is as follows. Participates actively in the response to hyperosmotic and heat shock by preventing the aggregation of stress-denatured proteins and by disaggregating proteins, also in an autonomous, DnaK-independent fashion. Unfolded proteins bind initially to DnaJ; upon interaction with the DnaJ-bound protein, DnaK hydrolyzes its bound ATP, resulting in the formation of a stable complex. GrpE releases ADP from DnaK; ATP binding to DnaK triggers the release of the substrate protein, thus completing the reaction cycle. Several rounds of ATP-dependent interactions between DnaJ, DnaK and GrpE are required for fully efficient folding. Also involved, together with DnaK and GrpE, in the DNA replication of plasmids through activation of initiation proteins. The chain is Chaperone protein DnaJ from Lactococcus lactis subsp. lactis (strain IL1403) (Streptococcus lactis).